The primary structure comprises 162 residues: Cyanate hydratase (162 aa).

Catalysis depends on residues R103, E106, and S129.

The protein belongs to the cyanase family.

The enzyme catalyses cyanate + hydrogencarbonate + 3 H(+) = NH4(+) + 2 CO2. Its function is as follows. Catalyzes the reaction of cyanate with bicarbonate to produce ammonia and carbon dioxide. This is Cyanate hydratase from Phaeosphaeria nodorum (strain SN15 / ATCC MYA-4574 / FGSC 10173) (Glume blotch fungus).